Reading from the N-terminus, the 435-residue chain is Serine--tRNA ligase (435 aa).

L-serine is bound at residue T233–E235. Residue R264–E266 coordinates ATP. Residue E287 participates in L-serine binding. E351–S354 is an ATP binding site. S386 serves as a coordination point for L-serine.

The protein belongs to the class-II aminoacyl-tRNA synthetase family. Type-1 seryl-tRNA synthetase subfamily. Homodimer. The tRNA molecule binds across the dimer.

Its subcellular location is the cytoplasm. It carries out the reaction tRNA(Ser) + L-serine + ATP = L-seryl-tRNA(Ser) + AMP + diphosphate + H(+). It catalyses the reaction tRNA(Sec) + L-serine + ATP = L-seryl-tRNA(Sec) + AMP + diphosphate + H(+). It functions in the pathway aminoacyl-tRNA biosynthesis; selenocysteinyl-tRNA(Sec) biosynthesis; L-seryl-tRNA(Sec) from L-serine and tRNA(Sec): step 1/1. Functionally, catalyzes the attachment of serine to tRNA(Ser). Is also able to aminoacylate tRNA(Sec) with serine, to form the misacylated tRNA L-seryl-tRNA(Sec), which will be further converted into selenocysteinyl-tRNA(Sec). This is Serine--tRNA ligase from Anaeromyxobacter sp. (strain K).